The following is a 415-amino-acid chain: Probable carboxypeptidase ACLA_013260 (415 aa).

An N-terminal signal peptide occupies residues M1–A17. A glycan (N-linked (GlcNAc...) asparagine) is linked at N97. D145 contributes to the Zn(2+) binding site. The active-site Proton acceptor is E177. Residue E178 coordinates Zn(2+). N271 carries N-linked (GlcNAc...) asparagine glycosylation.

It belongs to the peptidase M20A family. The cofactor is Zn(2+).

Its subcellular location is the secreted. This chain is Probable carboxypeptidase ACLA_013260, found in Aspergillus clavatus (strain ATCC 1007 / CBS 513.65 / DSM 816 / NCTC 3887 / NRRL 1 / QM 1276 / 107).